A 556-amino-acid polypeptide reads, in one-letter code: 2-succinyl-5-enolpyruvyl-6-hydroxy-3-cyclohexene-1-carboxylate synthase (556 aa).

Belongs to the TPP enzyme family. MenD subfamily. In terms of assembly, homodimer. Mg(2+) serves as cofactor. It depends on Mn(2+) as a cofactor. The cofactor is thiamine diphosphate.

The catalysed reaction is isochorismate + 2-oxoglutarate + H(+) = 5-enolpyruvoyl-6-hydroxy-2-succinyl-cyclohex-3-ene-1-carboxylate + CO2. Its pathway is quinol/quinone metabolism; 1,4-dihydroxy-2-naphthoate biosynthesis; 1,4-dihydroxy-2-naphthoate from chorismate: step 2/7. It participates in quinol/quinone metabolism; menaquinone biosynthesis. Its function is as follows. Catalyzes the thiamine diphosphate-dependent decarboxylation of 2-oxoglutarate and the subsequent addition of the resulting succinic semialdehyde-thiamine pyrophosphate anion to isochorismate to yield 2-succinyl-5-enolpyruvyl-6-hydroxy-3-cyclohexene-1-carboxylate (SEPHCHC). This Salmonella dublin (strain CT_02021853) protein is 2-succinyl-5-enolpyruvyl-6-hydroxy-3-cyclohexene-1-carboxylate synthase.